Here is a 147-residue protein sequence, read N- to C-terminus: Endothelial differentiation-related factor 1 homolog (147 aa).

The disordered stretch occupies residues 1 to 69 (MAESDWDTVT…KLDRETEELH (69 aa)). Basic and acidic residues predominate over residues 33–42 (RRGEEVETSK). A compositionally biased stretch (polar residues) spans 46–58 (AGQNKQHTITRNT). Residues 59–69 (AKLDRETEELH) are compositionally biased toward basic and acidic residues. The 55-residue stretch at 81 to 135 (IQQGRQGKGMTQKDLATKINEKPQVIADYECGKAIPNNQVMGKIERVIGLKLRGK) folds into the HTH cro/C1-type domain. A DNA-binding region (H-T-H motif) is located at residues 92-111 (QKDLATKINEKPQVIADYEC).

It is found in the nucleus. Functionally, probable transcriptional coactivator. The chain is Endothelial differentiation-related factor 1 homolog (edf1) from Xenopus laevis (African clawed frog).